Consider the following 331-residue polypeptide: Type 2 lactosamine alpha-2,3-sialyltransferase (331 aa).

At 1–4 the chain is on the cytoplasmic side; that stretch reads MRGY. Residues 5–25 form a helical; Signal-anchor for type II membrane protein membrane-spanning segment; the sequence is LVAIFLSAVFLYYVLHCILWG. Residues 26–331 lie on the Lumenal side of the membrane; sequence TNVYWVAPVE…KNLVINLTQD (306 aa). Residues asparagine 129, asparagine 181, asparagine 282, asparagine 295, asparagine 308, and asparagine 327 are each glycosylated (N-linked (GlcNAc...) asparagine).

The protein belongs to the glycosyltransferase 29 family. In terms of tissue distribution, ubiquitous.

It is found in the golgi apparatus membrane. It catalyses the reaction a neolactoside nLc4Cer(d18:1(4E)) + CMP-N-acetyl-beta-neuraminate = a neolactoside IV(3)-alpha-NeuAc-nLc4Cer(d18:1(4E)) + CMP + H(+). The enzyme catalyses a beta-D-galactosyl-(1-&gt;4)-N-acetyl-beta-D-glucosaminyl derivative + CMP-N-acetyl-beta-neuraminate = an N-acetyl-alpha-neuraminyl-(2-&gt;3)-beta-D-galactosyl-(1-&gt;4)-N-acetyl-beta-D-glucosaminyl derivative + CMP + H(+). The catalysed reaction is a neolactoside nLc6Cer(d18:1(4E)) + CMP-N-acetyl-beta-neuraminate = a neolactoside VI(3)-alpha-NeuNAc-nLc6Cer(d18:1(4E)) + CMP + H(+). Functionally, transfers the sialyl residue from CMP-N-acetyl-beta-neuraminate to the terminal galactose residue on sugar chains of glycoproteins and glycolipids. It's alpha-2,3-sialyltransferase activity is specific toward type II glycan chains (Galbeta1-4GlcNAc) on glycoproteins and glycolipids such as neolactosides nLc4Cer and nLc6Cer, whose sialyl-products serve as precursors for the Lewis X antigen. Critically involved in the synthesis of functional selectin ligands needed for neutrophil recruitment during inflammation and lymphocyte homing to the lymph nodes. In Homo sapiens (Human), this protein is Type 2 lactosamine alpha-2,3-sialyltransferase (ST3GAL6).